The following is a 580-amino-acid chain: MLNLLILILFIVFSSPIVAAEIFVSNTEKNCPEWSQDKLQRETNSLMQQMAHWDQLYRQKGISEIDDEVYDQLMSELTHWQFCLKQAPHSDFPVEVFPDNKLVHPVAHTGLSKLKDKQEINRWLHGRLPVWLQPKIDGVAVTLVYQNGKLVSLISRGNGAEGVNWTAKSRYIPDIPQNIENAPPDLVLQGELFLHKEEHRQQLLGSDGARNRVAGLMMRKDHSSELKQIGLFIWSWPDGPAEMESKLRKLADMGFPLALRYSHKIEEPEQVQKLRMHYFEQPMLFATDGIVLKQEIEPKGNQWRSGSNSWAVAWKHPLRHQVTQVREVNFTIGRTGKISVVLGLDKVKLDDRQISRVNIGSVRRWRQLDVLPGDRVTLTLAGHGIPKLAQVVWRIKERQDIQPPDKQHYHALSCLTLTVGCEQQFNARLKWLGENLQMTGVSSGSWAMLTERKLVTDLTGWLALSAQQIAALPGIGDKRAQAIYSQFSKAKNQPFSYWMKGIGVPYMDKLSDNVYHWQQLEQKLAAAQLKQQLTVGQLKKLSDFVSDAQIKAIAEKLSVAGITGFDRENGVVVNPADMAQ.

The active-site N6-AMP-lysine intermediate is the lysine 135.

Belongs to the NAD-dependent DNA ligase family. LigB subfamily.

It carries out the reaction NAD(+) + (deoxyribonucleotide)n-3'-hydroxyl + 5'-phospho-(deoxyribonucleotide)m = (deoxyribonucleotide)n+m + AMP + beta-nicotinamide D-nucleotide.. Functionally, catalyzes the formation of phosphodiester linkages between 5'-phosphoryl and 3'-hydroxyl groups in double-stranded DNA using NAD as a coenzyme and as the energy source for the reaction. The chain is DNA ligase B from Photorhabdus laumondii subsp. laumondii (strain DSM 15139 / CIP 105565 / TT01) (Photorhabdus luminescens subsp. laumondii).